Consider the following 83-residue polypeptide: Kunitz-type serine protease inhibitor (83 aa).

The N-terminal stretch at Met1–Leu25 is a signal peptide. The BPTI/Kunitz inhibitor domain maps to Cys31–Cys81. Cystine bridges form between Cys31–Cys81, Cys40–Cys64, and Cys56–Cys77.

As to expression, expressed by the venom gland.

It is found in the secreted. In terms of biological role, serine protease inhibitor that inhibits chymotrypsin (Ki=3520 nM). This Ophiophagus hannah (King cobra) protein is Kunitz-type serine protease inhibitor.